The primary structure comprises 494 residues: MASRILVNIKEEVTCPICLELLTEPLSLDCGHSFCQACITANHKESTPHQGERSCPLCRMSYPSENLRPNRHLANIVERLKEVMLSPEKGQKVGHCARHGEKLLLFCEQDGNVICWLCERSQEHRGHHTFLVEEVAEKYQEKLQVALEMMRQKQQDAEKLEADVREEQASWKIQIRNDKTNIMAEFKQLRDILDCEESKELQNLEKEEKNILKRLVQSESDMALQTQSMRVLISDLERRLQGSVLELLQGVDDVIKRIETVTLQKPKTFLNEKRRVFRAPDLKGMLQAFKELTEVQRYWAHVTLVPSHPSYTVISEDERQVRYQFPIHQPSVKVNYFYGVLGSPSITSGKHYWEVDVSNKRAWILGVCVSLKYNAKWNVLRPENYQPKNGYWVIGLQNTNNYSAFQDAVKYSDFQIGSRSTASVPLIVPLFMTICPNRVGVFLDYEACTVSFFNVTNNGFLIYKFSNCHFSYPVFPYFSPVTCELPMTLCSPSS.

A2 carries the N-acetylalanine modification. The RING-type zinc-finger motif lies at C15–R59. S86 carries the post-translational modification Phosphoserine. The B box-type zinc-finger motif lies at Q91–V132. Zn(2+) is bound by residues C96, H99, C118, and H124. Positions L131–A223 form a coiled coil. Positions F186–K199 are required for interaction with GABARAP and for autophagy. The region spanning P280–S494 is the B30.2/SPRY domain.

It belongs to the TRIM/RBCC family. Can form homodimers and homotrimers. In addition to lower-order dimerization, also exhibits a higher-order multimerization and both low- and high-order multimerizations are essential for its restriction activity. Interacts with BTBD1 and BTBD2. Interacts with PSMC4, PSMC5, PSMD7 and HSPA8/HSC70. Interacts (via B30.2/SPRY domain) with HSPA1A/B. Interacts with PSMC2, MAP3K7/TAK1, TAB2 and TAB3. Interacts with SQSTM1. Interacts with TRIM6 and TRIM34. Interacts with ULK1 (phosphorylated form), GABARAP, GABARAPL1, GABARAPL2, MAP1LC3A, MAP1LC3C and BECN1. Degraded in a proteasome-independent fashion in the absence of viral infection but in a proteasome-dependent fashion following exposure to restriction sensitive virus. Post-translationally, autoubiquitinated in a RING finger- and UBE2D2-dependent manner. Monoubiquitinated by TRIM21. Deubiquitinated by Yersinia YopJ. Ubiquitination may not lead to proteasomal degradation.

It localises to the cytoplasm. It is found in the nucleus. The catalysed reaction is S-ubiquitinyl-[E2 ubiquitin-conjugating enzyme]-L-cysteine + [acceptor protein]-L-lysine = [E2 ubiquitin-conjugating enzyme]-L-cysteine + N(6)-ubiquitinyl-[acceptor protein]-L-lysine.. Its pathway is protein modification; protein ubiquitination. Capsid-specific restriction factor that prevents infection from non-host-adapted retroviruses. Blocks viral replication early in the life cycle, after viral entry but before reverse transcription. In addition to acting as a capsid-specific restriction factor, also acts as a pattern recognition receptor that activates innate immune signaling in response to the retroviral capsid lattice. Binding to the viral capsid triggers its E3 ubiquitin ligase activity, and in concert with the heterodimeric ubiquitin conjugating enzyme complex UBE2V1-UBE2N (also known as UBC13-UEV1A complex) generates 'Lys-63'-linked polyubiquitin chains, which in turn are catalysts in the autophosphorylation of the MAP3K7/TAK1 complex (includes TAK1, TAB2, and TAB3). Activation of the MAP3K7/TAK1 complex by autophosphorylation results in the induction and expression of NF-kappa-B and MAPK-responsive inflammatory genes, thereby leading to an innate immune response in the infected cell. Plays a role in regulating autophagy through activation of autophagy regulator BECN1 by causing its dissociation from its inhibitors BCL2 and TAB2. This chain is Tripartite motif-containing protein 5 (TRIM5), found in Saguinus oedipus (Cotton-top tamarin).